The sequence spans 403 residues: S-adenosylmethionine synthase (403 aa).

Residue His-16 coordinates ATP. Asp-18 contributes to the Mg(2+) binding site. Residue Glu-44 coordinates K(+). 2 residues coordinate L-methionine: Glu-57 and Gln-100. Residues 100-110 (QSPDIAQGVDR) are flexible loop. Residues 106-126 (QGVDRSYESRSGSASTDAHDL) are disordered. Residues 176–178 (DGK), 248–249 (KF), Asp-257, 263–264 (RK), Ala-280, and Lys-284 contribute to the ATP site. Residue Asp-257 coordinates L-methionine. Lys-288 is a binding site for L-methionine.

The protein belongs to the AdoMet synthase family. In terms of assembly, homotetramer; dimer of dimers. The cofactor is Mg(2+). Requires K(+) as cofactor.

It localises to the cytoplasm. The enzyme catalyses L-methionine + ATP + H2O = S-adenosyl-L-methionine + phosphate + diphosphate. Its pathway is amino-acid biosynthesis; S-adenosyl-L-methionine biosynthesis; S-adenosyl-L-methionine from L-methionine: step 1/1. Catalyzes the formation of S-adenosylmethionine (AdoMet) from methionine and ATP. The overall synthetic reaction is composed of two sequential steps, AdoMet formation and the subsequent tripolyphosphate hydrolysis which occurs prior to release of AdoMet from the enzyme. In Clavibacter michiganensis subsp. michiganensis (strain NCPPB 382), this protein is S-adenosylmethionine synthase.